A 240-amino-acid polypeptide reads, in one-letter code: Adenosylcobinamide-GDP ribazoletransferase (240 aa).

5 consecutive transmembrane segments (helical) span residues 31 to 51 (LLYY…ASHL), 62 to 81 (ALLL…DGLA), 109 to 129 (IAVV…WVLV), 133 to 153 (IGAQ…GLFL), and 179 to 199 (VLLV…LLAL).

Belongs to the CobS family. Mg(2+) serves as cofactor.

It localises to the cell inner membrane. The enzyme catalyses alpha-ribazole + adenosylcob(III)inamide-GDP = adenosylcob(III)alamin + GMP + H(+). It catalyses the reaction alpha-ribazole 5'-phosphate + adenosylcob(III)inamide-GDP = adenosylcob(III)alamin 5'-phosphate + GMP + H(+). The protein operates within cofactor biosynthesis; adenosylcobalamin biosynthesis; adenosylcobalamin from cob(II)yrinate a,c-diamide: step 7/7. In terms of biological role, joins adenosylcobinamide-GDP and alpha-ribazole to generate adenosylcobalamin (Ado-cobalamin). Also synthesizes adenosylcobalamin 5'-phosphate from adenosylcobinamide-GDP and alpha-ribazole 5'-phosphate. This is Adenosylcobinamide-GDP ribazoletransferase from Pseudomonas putida (strain ATCC 700007 / DSM 6899 / JCM 31910 / BCRC 17059 / LMG 24140 / F1).